The following is a 226-amino-acid chain: Beta-phosphoglucomutase (226 aa).

Residue aspartate 7 is the Nucleophile of the active site. Mg(2+) contacts are provided by aspartate 7 and aspartate 9. At aspartate 7 the chain carries 4-aspartylphosphate. The active-site Proton donor/acceptor is the aspartate 9. Residues aspartate 9, glycine 44, isoleucine 45, arginine 47, serine 116, arginine 117, and asparagine 118 each coordinate beta-D-glucose 6-phosphate. Aspartate 170 provides a ligand contact to Mg(2+).

The protein belongs to the HAD-like hydrolase superfamily. CbbY/CbbZ/Gph/YieH family. As to quaternary structure, homodimer. It depends on Mg(2+) as a cofactor. Post-translationally, autophosphorylated.

It is found in the cytoplasm. The enzyme catalyses beta-D-glucose 1-phosphate = beta-D-glucose 6-phosphate. Functionally, catalyzes the interconversion of D-glucose 1-phosphate (G1P) and D-glucose 6-phosphate (G6P), forming beta-D-glucose 1,6-(bis)phosphate (beta-G16P) as an intermediate. In Bacillus subtilis (strain 168), this protein is Beta-phosphoglucomutase (yvdM).